Reading from the N-terminus, the 319-residue chain is MGTWRRLLLFGGVSLRGGGAATVPPRGCRALGCGRQLLGAESEALKQRRTQIMSRGLPKQKPIEGVREVIVVASGKGGVGKSTTAVNLALALAANDSSKAVGLLDVDVYGPSIPKMMNLRGNPELSPNNLMRPLLNYGIACMSMGFLVEETAPLVWRGLMVMSAIEKLLRQVDWGQLDYLVVDMPPGTGDVQLSVSQNIPISGAVIVSTPQDIALMDAHKGAEMFRKVNVPVLGLVQNMSVFQCPKCKHKTHIFGADGARKLAQTLDLDVLGDVPLHLSIREASDMGQPVVFSQPGSDEAKAYLHIASEVVRRLKSSPE.

Residues 1 to 38 (MGTWRRLLLFGGVSLRGGGAATVPPRGCRALGCGRQLL) constitute a mitochondrion transit peptide. 75-82 (GKGGVGKS) is an ATP binding site.

This sequence belongs to the Mrp/NBP35 ATP-binding proteins family. Requires [4Fe-4S] cluster as cofactor.

The protein resides in the mitochondrion. Iron-sulfur cluster transfer protein involved in the assembly of the mitochondrial membrane respiratory chain NADH dehydrogenase (Complex I). May deliver one or more Fe-S clusters to complex I subunits. The polypeptide is Iron-sulfur cluster transfer protein NUBPL (Nubpl) (Mus musculus (Mouse)).